Reading from the N-terminus, the 974-residue chain is MAFSKFGKMFRLPTIEIKKKTKQYNHLQRDVNPNDMWEIIGELGDGAFGKVYKAQNKETGVLAAAKVIETKSEEELEDYMVEIDILASCNHQYIVKLLDAFFFDNKLSIMIEFCPGGAVDAIMLELDRGLQEPQIRVICKQMLEALQYLHSMKIIHRDLKAGNILLTLDGDIKLADFGVSAKNTKTLQRRDSFIGTPYWMAPEVVMCETMKDAPYDYKADIWSLGITLIELAQIEPPHHELNPMRVLLKIAKSEPPGLDQPSKWSMDFNDFLKKALDRHPETRPTAAQLLEHPFVSSVNTNRPLRELVAEAKAEVMEEIEDNHEDGEDEDPADLTPVQAPTKDPSQTSATSLNGDHPHGTCYAETSMEIEEEPSTLESTKTPLKEQEDNLSDKFQVEDHDKPESEASGKASSSDSGIEDGKSTPTSEEDTKTVEASEPELPVQRTPTPAEEPEYPSETMEKYLEKPKEPEKEDHCEETQPVLKRIQLKDPNGRMSVVSNRSSFAGDDAESLVSHTNGRLSNRYSDVASDSMDISLNLSGDLSVNKEMGTISLRDSKKTLKRTRRFLVDGVEVSVTTSKIITDDEKKDEEMRFLRRQELRDLRLLQKEQHRSLTVLNMKLKEQREQMHRRFDQEMNAKKKYYYTELEALEKHQKQTIERMETEHSNSLREEGKRIRVEQEKAYQKFLDQMKQKKKEVKQEVEKMPRNQRKDTMKMKMNNYQQMRSDEEQKFIADQKEYLDVTLKSIISKNKHEISETERQCLLKKQNLVREREATLWDMEEKNLHERHQLHKQQLKDQYFLQRHQLLKKHEKEQEQMLHYNLRMVELLKARQQQERNRLPKIQRNEAKTRMVMFKKSLKINSSGSAAEDREKVKQFSRMEEKRQKAERLHQQQKHENQMREMLSQCDGNTRELQQLQNEKCHLLIENETQRLKSLDEQHNQQLKEWREHLKPRKKVLEDELTLRKRAGAFLQDDG.

The 259-residue stretch at 37–295 (WEIIGELGDG…AAQLLEHPFV (259 aa)) folds into the Protein kinase domain. Residues 43–51 (LGDGAFGKV) and K66 each bind ATP. Catalysis depends on D158, which acts as the Proton acceptor. Over residues 320-332 (EDNHEDGEDEDPA) the composition is skewed to acidic residues. Residues 320–479 (EDNHEDGEDE…EKEDHCEETQ (160 aa)) are disordered. Residues 343–353 (DPSQTSATSLN) are compositionally biased toward polar residues. 2 stretches are compositionally biased toward basic and acidic residues: residues 382–406 (PLKEQEDNLSDKFQVEDHDKPESEA) and 458–477 (TMEKYLEKPKEPEKEDHCEE). Coiled-coil stretches lie at residues 605 to 729 (QKEQ…EEQK) and 870 to 950 (EKVK…EHLK).

It belongs to the protein kinase superfamily. STE Ser/Thr protein kinase family. STE20 subfamily. In terms of assembly, homodimer. Post-translationally, autophosphorylates.

It localises to the cell membrane. It catalyses the reaction L-seryl-[protein] + ATP = O-phospho-L-seryl-[protein] + ADP + H(+). The enzyme catalyses L-threonyl-[protein] + ATP = O-phospho-L-threonyl-[protein] + ADP + H(+). Functionally, may act as a polo kinase kinase by mediating phosphorylation of plk1. The sequence is that of Serine/threonine-protein kinase 10 (stk10) from Danio rerio (Zebrafish).